The following is a 411-amino-acid chain: Na(+)-translocating NADH-quinone reductase subunit F (411 aa).

The chain crosses the membrane as a helical span at residues A6 to A26. The 2Fe-2S ferredoxin-type domain maps to G35–F129. Positions 72, 78, 81, and 113 each coordinate [2Fe-2S] cluster. Residues V132–K273 enclose the FAD-binding FR-type domain.

Belongs to the NqrF family. As to quaternary structure, composed of six subunits; NqrA, NqrB, NqrC, NqrD, NqrE and NqrF. [2Fe-2S] cluster is required as a cofactor. It depends on FAD as a cofactor.

Its subcellular location is the cell inner membrane. It carries out the reaction a ubiquinone + n Na(+)(in) + NADH + H(+) = a ubiquinol + n Na(+)(out) + NAD(+). Its function is as follows. NQR complex catalyzes the reduction of ubiquinone-1 to ubiquinol by two successive reactions, coupled with the transport of Na(+) ions from the cytoplasm to the periplasm. The first step is catalyzed by NqrF, which accepts electrons from NADH and reduces ubiquinone-1 to ubisemiquinone by a one-electron transfer pathway. In Psychrobacter arcticus (strain DSM 17307 / VKM B-2377 / 273-4), this protein is Na(+)-translocating NADH-quinone reductase subunit F.